The chain runs to 596 residues: Linalool synthase TPS3, chloroplastic (596 aa).

The N-terminal 39 residues, 1 to 39 (MISSLNPLFTTHRSGVIAQQFFASSAAASINSVSSLKIA), are a transit peptide targeting the chloroplast. (2E)-geranyl diphosphate is bound by residues Arg308, Asp345, Asp349, Arg486, and Asn489. Mg(2+)-binding residues include Asp345 and Asp349. The short motif at 345–349 (DDIYD) is the DDXXD motif element. Residues Asn489, Thr493, and Ser497 each contribute to the Mg(2+) site.

The protein belongs to the terpene synthase family. Tpsb subfamily. In terms of assembly, monomer. Mg(2+) is required as a cofactor. Mn(2+) serves as cofactor. As to expression, expressed in flowers and fruits.

Its subcellular location is the plastid. It localises to the chloroplast. The catalysed reaction is (2E)-geranyl diphosphate = beta-myrcene + diphosphate. The enzyme catalyses (2E)-geranyl diphosphate + H2O = linalool + diphosphate. It catalyses the reaction (2E)-geranyl diphosphate = (Z)-beta-ocimene + diphosphate. It carries out the reaction (2E)-geranyl diphosphate = (E)-beta-ocimene + diphosphate. The protein operates within secondary metabolite biosynthesis; terpenoid biosynthesis. Functionally, monoterpene synthase (mono-TPS) involved in the biosynthesis of monoterpenes natural products, constituent of coffee beverage aroma. Catalyzes the conversion of (2E)-geranyl diphosphate (GPP) into linalool and beta-myrcene, and, as minor products, cis-ocimene and trans-ocimene. Not able to use geranylgeranyl pyrophosphate (GGPP) and farnesyl pyrophosphate (FPP) as substrates. The polypeptide is Linalool synthase TPS3, chloroplastic (Coffea arabica (Arabian coffee)).